We begin with the raw amino-acid sequence, 494 residues long: Glycerol kinase (494 aa).

Residue T13 participates in ADP binding. Positions 13, 14, and 15 each coordinate ATP. T13 contacts sn-glycerol 3-phosphate. ADP is bound at residue R17. Residues R83, E84, Y135, and D244 each coordinate sn-glycerol 3-phosphate. Glycerol-binding residues include R83, E84, Y135, D244, and Q245. Residues T266 and G309 each contribute to the ADP site. ATP is bound by residues T266, G309, Q313, and G410. Positions 410 and 414 each coordinate ADP.

The protein belongs to the FGGY kinase family.

It carries out the reaction glycerol + ATP = sn-glycerol 3-phosphate + ADP + H(+). The protein operates within polyol metabolism; glycerol degradation via glycerol kinase pathway; sn-glycerol 3-phosphate from glycerol: step 1/1. Its activity is regulated as follows. Inhibited by fructose 1,6-bisphosphate (FBP). Key enzyme in the regulation of glycerol uptake and metabolism. Catalyzes the phosphorylation of glycerol to yield sn-glycerol 3-phosphate. The polypeptide is Glycerol kinase (Shewanella baltica (strain OS185)).